A 144-amino-acid polypeptide reads, in one-letter code: Large ribosomal subunit protein uL15 (144 aa).

Residues 1 to 57 (MELNNIKPADGAKKDKRRVGRGIGSGLGKTAGRGHKGQKSRAGGFHKVGFEGGQMPM) form a disordered region. Residues 21–31 (RGIGSGLGKTA) show a composition bias toward gly residues.

It belongs to the universal ribosomal protein uL15 family. As to quaternary structure, part of the 50S ribosomal subunit.

Functionally, binds to the 23S rRNA. This Thiobacillus denitrificans (strain ATCC 25259 / T1) protein is Large ribosomal subunit protein uL15.